The chain runs to 212 residues: MRLVLASNNAKKLKELGTLLAPAGVELVTQGSLGIAEAEEPHHTFIENALAKARHAAAASGLPAIADDSGLCVDALGGQPGVQSAHYATLDPADIDGLAREALRERQDAANNRRLLSALDGQANRRARFVCTLVAIRSADDPEPLVALGRWEGELLTGLRGSGGFGYDPLLSIPALDATVAQLDAETKNRHSHRALAAEQMVALMRSAWHLA.

Substrate is bound at residue 7-12 (SNNAKK). Glu-39 and Asp-68 together coordinate Mg(2+). The active-site Proton acceptor is the Asp-68. Substrate-binding positions include Ser-69, 165 to 168 (FGYD), Lys-188, and 193 to 194 (HR).

Belongs to the HAM1 NTPase family. Homodimer. Requires Mg(2+) as cofactor.

It catalyses the reaction XTP + H2O = XMP + diphosphate + H(+). The catalysed reaction is dITP + H2O = dIMP + diphosphate + H(+). It carries out the reaction ITP + H2O = IMP + diphosphate + H(+). Functionally, pyrophosphatase that catalyzes the hydrolysis of nucleoside triphosphates to their monophosphate derivatives, with a high preference for the non-canonical purine nucleotides XTP (xanthosine triphosphate), dITP (deoxyinosine triphosphate) and ITP. Seems to function as a house-cleaning enzyme that removes non-canonical purine nucleotides from the nucleotide pool, thus preventing their incorporation into DNA/RNA and avoiding chromosomal lesions. The chain is dITP/XTP pyrophosphatase from Leptothrix cholodnii (strain ATCC 51168 / LMG 8142 / SP-6) (Leptothrix discophora (strain SP-6)).